The following is a 196-amino-acid chain: Small ribosomal subunit protein uS4c (196 aa).

Residues 82–143 (MRLDNILFRL…KQKSKALIQN (62 aa)) form the S4 RNA-binding domain.

The protein belongs to the universal ribosomal protein uS4 family. In terms of assembly, part of the 30S ribosomal subunit. Contacts protein S5. The interaction surface between S4 and S5 is involved in control of translational fidelity.

Its subcellular location is the plastid. It localises to the chloroplast. In terms of biological role, one of the primary rRNA binding proteins, it binds directly to 16S rRNA where it nucleates assembly of the body of the 30S subunit. Its function is as follows. With S5 and S12 plays an important role in translational accuracy. The protein is Small ribosomal subunit protein uS4c (rps4) of Patersonia sp. (strain Lejeune 1997).